The primary structure comprises 124 residues: Small ribosomal subunit protein uS12 (124 aa).

The residue at position 89 (aspartate 89) is a 3-methylthioaspartic acid.

This sequence belongs to the universal ribosomal protein uS12 family. In terms of assembly, part of the 30S ribosomal subunit. Contacts proteins S8 and S17. May interact with IF1 in the 30S initiation complex.

Functionally, with S4 and S5 plays an important role in translational accuracy. Interacts with and stabilizes bases of the 16S rRNA that are involved in tRNA selection in the A site and with the mRNA backbone. Located at the interface of the 30S and 50S subunits, it traverses the body of the 30S subunit contacting proteins on the other side and probably holding the rRNA structure together. The combined cluster of proteins S8, S12 and S17 appears to hold together the shoulder and platform of the 30S subunit. The chain is Small ribosomal subunit protein uS12 from Yersinia pestis (strain Pestoides F).